A 633-amino-acid polypeptide reads, in one-letter code: GRAM domain-containing protein 4 (633 aa).

Disordered regions lie at residues 1-46 (MGIA…VRPR), 72-109 (LAESPNASDTECGDEIPLKTPRPSPRDSEELRDPAGPG), and 182-216 (VLKARSEEQPAQPQQPPKGQSQASNGTGTERRSQG). The span at 27–39 (PWDKGLSGREPPR) shows a compositional bias: basic and acidic residues. S75 and S79 each carry phosphoserine. The span at 95–104 (SPRDSEELRD) shows a compositional bias: basic and acidic residues. A coiled-coil region spans residues 134-190 (HLEIALLEKHFLQEELRKLREETNSEMLRQELDRERQRRIELEQKMQEVLKARSEEQ). The segment covering 190–205 (QPAQPQQPPKGQSQAS) has biased composition (low complexity). 3 helical membrane-spanning segments follow: residues 295–315 (VYMNAVWHGWAIPMFLFLAIL), 389–409 (TTQKLYVALWAAFLASCFFPY), and 411–431 (LVGLAVGLYAGIKFFLIDFIF). The 79-residue stretch at 500–578 (GNFHEIFNLT…MDITDIQKYK (79 aa)) folds into the GRAM domain.

In terms of assembly, interacts with RTN4 (isoform B).

Its subcellular location is the mitochondrion membrane. It localises to the endoplasmic reticulum membrane. Plays a role as a mediator of E2F1-induced apoptosis in the absence of p53/TP53. Inhibits TLR9 response to nucelic acids and regulates TLR9-mediated innate immune response. The chain is GRAM domain-containing protein 4 from Mus musculus (Mouse).